The following is a 366-amino-acid chain: Phospho-N-acetylmuramoyl-pentapeptide-transferase (366 aa).

The next 10 membrane-spanning stretches (helical) occupy residues 27–47, 71–91, 93–113, 134–154, 174–194, 205–225, 245–265, 268–288, 294–314, and 343–363; these read AALFTSALIVFLFGPTIINSL, TPTMGGLMILAGIVGASLLWA, LSNVYVVATLLVTLGFGAIGF, LGIEFVIAGIAVYFMMRTALA, FLINLGIMFVVFGGFVIVGAG, GLAIVPVMIAAASFGVIAYLA, LAVVLGAVIGAGLGFLWFNAP, AIFMGDTGSLALGGTIGTVAV, IVMAIIGGLFVMETLSVIIQV, and QVVIRFWIIAVGLALLGLSTL.

This sequence belongs to the glycosyltransferase 4 family. MraY subfamily. Requires Mg(2+) as cofactor.

It is found in the cell inner membrane. The enzyme catalyses UDP-N-acetyl-alpha-D-muramoyl-L-alanyl-gamma-D-glutamyl-meso-2,6-diaminopimeloyl-D-alanyl-D-alanine + di-trans,octa-cis-undecaprenyl phosphate = di-trans,octa-cis-undecaprenyl diphospho-N-acetyl-alpha-D-muramoyl-L-alanyl-D-glutamyl-meso-2,6-diaminopimeloyl-D-alanyl-D-alanine + UMP. Its pathway is cell wall biogenesis; peptidoglycan biosynthesis. Catalyzes the initial step of the lipid cycle reactions in the biosynthesis of the cell wall peptidoglycan: transfers peptidoglycan precursor phospho-MurNAc-pentapeptide from UDP-MurNAc-pentapeptide onto the lipid carrier undecaprenyl phosphate, yielding undecaprenyl-pyrophosphoryl-MurNAc-pentapeptide, known as lipid I. In Rhizobium etli (strain ATCC 51251 / DSM 11541 / JCM 21823 / NBRC 15573 / CFN 42), this protein is Phospho-N-acetylmuramoyl-pentapeptide-transferase.